Reading from the N-terminus, the 386-residue chain is AimR transcriptional regulator (386 aa).

As to quaternary structure, homodimer. Interacts with the viral arbitrium peptide, this interaction changes the oligomeric state of AimR from an active dimer to an inactive monomer leading to lysogeny.

In terms of biological role, transcriptional regulator which is part of the latency-replication switch system that decides at the onset of infection whether to replicate and lyse the host or to lysogenize (latency) and keep the host viable. Activates the transcription of the aimX locus. Transcriptional activation of aimX seems to lead to the productive viral replication (lytic cycle), aimX possibly acting as a regulatory non-coding RNA. The chain is AimR transcriptional regulator from Bacillus pumilus (Bacillus mesentericus).